The primary structure comprises 304 residues: Phosphonates import ATP-binding protein PhnC 1 (304 aa).

The 237-residue stretch at 4–240 (VSLQNVTKLF…VIDDLYYAGS (237 aa)) folds into the ABC transporter domain. An ATP-binding site is contributed by 37–44 (GPSGAGKS). A disordered region spans residues 240–304 (SESTPVSHGD…TETDTGEAQL (65 aa)). Residues 263 to 272 (TSVSSDMETT) show a composition bias toward polar residues. Residues 289–304 (TDTETDTETDTGEAQL) show a composition bias toward acidic residues.

The protein belongs to the ABC transporter superfamily. Phosphonates importer (TC 3.A.1.9.1) family. As to quaternary structure, the complex is composed of two ATP-binding proteins (PhnC), two transmembrane proteins (PhnE) and a solute-binding protein (PhnD).

The protein localises to the cell membrane. The catalysed reaction is phosphonate(out) + ATP + H2O = phosphonate(in) + ADP + phosphate + H(+). Part of the ABC transporter complex PhnCDE involved in phosphonates import. Responsible for energy coupling to the transport system. In Haloquadratum walsbyi (strain DSM 16790 / HBSQ001), this protein is Phosphonates import ATP-binding protein PhnC 1.